Here is a 272-residue protein sequence, read N- to C-terminus: Putative phosphoenolpyruvate synthase regulatory protein (272 aa).

152–159 contributes to the ADP binding site; that stretch reads GVSRCGKT.

The protein belongs to the pyruvate, phosphate/water dikinase regulatory protein family. PSRP subfamily.

The enzyme catalyses [pyruvate, water dikinase] + ADP = [pyruvate, water dikinase]-phosphate + AMP + H(+). It catalyses the reaction [pyruvate, water dikinase]-phosphate + phosphate + H(+) = [pyruvate, water dikinase] + diphosphate. In terms of biological role, bifunctional serine/threonine kinase and phosphorylase involved in the regulation of the phosphoenolpyruvate synthase (PEPS) by catalyzing its phosphorylation/dephosphorylation. The protein is Putative phosphoenolpyruvate synthase regulatory protein of Stutzerimonas stutzeri (strain A1501) (Pseudomonas stutzeri).